The following is a 251-amino-acid chain: Triosephosphate isomerase (251 aa).

Residue Asn-9–Lys-11 coordinates substrate. The Electrophile role is filled by His-95. Glu-167 serves as the catalytic Proton acceptor. Residues Gly-173, Ser-212, and Gly-233 to Gly-234 contribute to the substrate site.

This sequence belongs to the triosephosphate isomerase family. In terms of assembly, homodimer.

The protein resides in the cytoplasm. The enzyme catalyses D-glyceraldehyde 3-phosphate = dihydroxyacetone phosphate. It functions in the pathway carbohydrate biosynthesis; gluconeogenesis. Its pathway is carbohydrate degradation; glycolysis; D-glyceraldehyde 3-phosphate from glycerone phosphate: step 1/1. In terms of biological role, involved in the gluconeogenesis. Catalyzes stereospecifically the conversion of dihydroxyacetone phosphate (DHAP) to D-glyceraldehyde-3-phosphate (G3P). In Pseudomonas syringae pv. tomato (strain ATCC BAA-871 / DC3000), this protein is Triosephosphate isomerase.